The chain runs to 420 residues: Ribosome biogenesis protein WDR12 homolog (420 aa).

The ubiquitin-like (UBL) domain stretch occupies residues 10-92; sequence VQVHLKTKQE…EDAIEIEYVE (83 aa). WD repeat units lie at residues 104 to 142, 143 to 185, 192 to 231, 250 to 288, 290 to 329, 335 to 375, and 379 to 417; these read LHDD…LTIS, GHTA…NSVE, GHER…AVEG, GHRE…IKTE, STNK…GSVV, GHNA…APLY, and GHGE…ADDA.

The protein belongs to the WD repeat WDR12/YTM1 family.

The protein resides in the nucleus. It is found in the nucleolus. The protein localises to the nucleoplasm. In terms of biological role, required for maturation of ribosomal RNAs and formation of the large ribosomal subunit. In Drosophila yakuba (Fruit fly), this protein is Ribosome biogenesis protein WDR12 homolog.